Here is a 526-residue protein sequence, read N- to C-terminus: Cytochrome P450 monooxygeanse terK (526 aa).

A helical membrane pass occupies residues Asn21–Phe43. Residue Cys465 participates in heme binding.

This sequence belongs to the cytochrome P450 family. Heme is required as a cofactor.

The protein localises to the membrane. Its pathway is secondary metabolite biosynthesis. Functionally, cytochrome P450 monooxygeanse; part of the gene cluster that mediates the biosynthesis of terpendoles, indole-diterpene (IDT) mycotoxins including terpendole I, terpendole K, terpendole C, as well as the kinesin Eg5 inhibitor terpendole E. Terpendoles biosynthesis begins with the synthesis of geranylgeranyl diphosphate (GGPP) by a yet unidentified GGPP synthase. Condensation of indole-3-glycerol phosphate with GGPP by the prenyltransferase terC then forms 3-geranylgeranylindole (3-GGI), followed by epoxidation and cyclization of this intermediate (by the FAD-dependent monooxygeanse terM and the terpene cyclase terB) to form paspaline. The cytochrome monooxygenase terQ then hydroxylates paspalline at C-11 to yield terpendole E. The cytochrome monooxygenase terP converts terpendole E to 13-desoxyterpendole I, and terQ converts 13-desoxyterpendole I into terpendole I. TerF and terK are required for conversion of terpendole I to terpendole C which is further converted to terpendole K. This Tolypocladium album (Soil fungus) protein is Cytochrome P450 monooxygeanse terK.